Reading from the N-terminus, the 367-residue chain is Innexin inx4 (367 aa).

The Cytoplasmic segment spans residues 1–21 (MYAAVKPLSKYLQFKSVHIYD). A helical transmembrane segment spans residues 22-42 (AIFTLHSKVTVALLLACTFLL). The Extracellular segment spans residues 43–110 (SSKQYFGDPI…PENRNYITYY (68 aa)). A helical membrane pass occupies residues 111–131 (QWVVLVLLLESFVFYMPAFLW). Over 132–186 (KIWEGGRLKHLCDDFHKMAVCKDKSRTHLRVLVNYFSSDYKETHFRYFVSYVFCE) the chain is Cytoplasmic. The helical transmembrane segment at 187–207 (ILNLSISILNFLLLDVFFGGF) threads the bilayer. At 208-268 (WGRYRNALLS…LLPLNILNEK (61 aa)) the chain is on the extracellular side. A helical membrane pass occupies residues 269–289 (IFAFLWIWFILVAMLISLKFL). Residues 290–367 (YRLATVLYPG…IKIPPGADKI (78 aa)) lie on the Cytoplasmic side of the membrane.

This sequence belongs to the pannexin family. Expressed in nurse cells and oocyte during oogenesis. Uniform expression in imaginal wing disk and low expression in developing imaginal CNS. Expressed in embryonic pole cells and primordial germ cells.

Its subcellular location is the cell membrane. The protein resides in the cell junction. It localises to the gap junction. Its function is as follows. Structural component of the gap junctions in germline cells. Required for differentiation and survival of germline cysts in females and of spermatogonia in males; gap junctional communication between spermatogonia and somatic cyst cells may be required for normal differentiation and survival of spermatogonia. The protein is Innexin inx4 (zpg) of Drosophila melanogaster (Fruit fly).